A 773-amino-acid polypeptide reads, in one-letter code: Molybdenum cofactor sulfurase (773 aa).

N6-(pyridoxal phosphate)lysine is present on Lys-243. Residue Cys-410 is part of the active site. The MOSC domain maps to 632–773 (LRLLRQSGQR…LSCGDTVLVE (142 aa)). The residue at position 731 (Ser-731) is a Phosphoserine.

This sequence belongs to the class-V pyridoxal-phosphate-dependent aminotransferase family. MOCOS subfamily. The cofactor is pyridoxal 5'-phosphate.

It catalyses the reaction Mo-molybdopterin + L-cysteine + AH2 = thio-Mo-molybdopterin + L-alanine + A + H2O. It functions in the pathway cofactor biosynthesis; molybdopterin biosynthesis. Its function is as follows. Sulfurates the molybdenum cofactor. Sulfation of molybdenum is essential for xanthine dehydrogenase (XDH) and aldehyde oxidase (ADO) enzymes in which molybdenum cofactor is liganded by 1 oxygen and 1 sulfur atom in active form. This chain is Molybdenum cofactor sulfurase, found in Drosophila ananassae (Fruit fly).